A 609-amino-acid chain; its full sequence is Glutamine--fructose-6-phosphate aminotransferase [isomerizing] (609 aa).

Residue C2 is the Nucleophile; for GATase activity of the active site. The Glutamine amidotransferase type-2 domain maps to 2–218; it reads CGIVGAVAQR…EGDVAEVTRR (217 aa). 2 SIS domains span residues 286–426 and 458–599; these read AAEF…HNGM and LAED…VDQP. K604 (for Fru-6P isomerization activity) is an active-site residue.

Homodimer.

Its subcellular location is the cytoplasm. It carries out the reaction D-fructose 6-phosphate + L-glutamine = D-glucosamine 6-phosphate + L-glutamate. In terms of biological role, catalyzes the first step in hexosamine metabolism, converting fructose-6P into glucosamine-6P using glutamine as a nitrogen source. In Shewanella oneidensis (strain ATCC 700550 / JCM 31522 / CIP 106686 / LMG 19005 / NCIMB 14063 / MR-1), this protein is Glutamine--fructose-6-phosphate aminotransferase [isomerizing].